Consider the following 226-residue polypeptide: Lipoprotein-releasing system ATP-binding protein LolD (226 aa).

Residues 5-226 (LKATNINKIY…LLRNGHWENY (222 aa)) enclose the ABC transporter domain. An ATP-binding site is contributed by 41–48 (GTSGSGKS).

It belongs to the ABC transporter superfamily. Lipoprotein translocase (TC 3.A.1.125) family. The complex is composed of two ATP-binding proteins (LolD) and two transmembrane proteins (LolC and LolE).

The protein resides in the cell inner membrane. Its function is as follows. Part of the ABC transporter complex LolCDE involved in the translocation of mature outer membrane-directed lipoproteins, from the inner membrane to the periplasmic chaperone, LolA. Responsible for the formation of the LolA-lipoprotein complex in an ATP-dependent manner. The chain is Lipoprotein-releasing system ATP-binding protein LolD from Psychrobacter cryohalolentis (strain ATCC BAA-1226 / DSM 17306 / VKM B-2378 / K5).